The sequence spans 865 residues: Nicotinate catabolism cluster-specific transcription factor (865 aa).

2 consecutive C2H2-type zinc fingers follow at residues 8–32 (HACT…SLNH) and 41–63 (YTCQ…LDRH). A disordered region spans residues 74-168 (GKGVLETRKR…SIDDDGTDPD (95 aa)). The Nuclear localization signal(NLS) motif lies at 77–87 (VLETRKRMRRA). The span at 78–89 (LETRKRMRRAED) shows a compositional bias: basic and acidic residues. Positions 96–105 (PPKRPSRHQQ) are enriched in basic residues. A compositionally biased stretch (low complexity) spans 108–132 (GPPVGAPLSSSGSVSAGSGRSSRSP). The Nuclear export signal (NES) motif lies at 285–289 (LDIDL).

The protein resides in the nucleus. In terms of biological role, transcription factor that specifically regulates the expression of the hxn gene cluster that mediates the degradation of nicotinate and related metabolites. This is Nicotinate catabolism cluster-specific transcription factor from Emericella nidulans (strain FGSC A4 / ATCC 38163 / CBS 112.46 / NRRL 194 / M139) (Aspergillus nidulans).